The following is a 428-amino-acid chain: Ammonium transporter AmtB (428 aa).

Residues Met1–Ala22 form the signal peptide. Over Ala23–Asn32 the chain is Periplasmic. The chain crosses the membrane as a helical span at residues Ala33–Tyr54. At Gly55–Ser65 the chain is on the cytoplasmic side. The chain crosses the membrane as a helical span at residues Met66 to Phe90. The Periplasmic segment spans residues Gly91–Gln119. A helical membrane pass occupies residues Tyr120–Ala142. Residues Glu143–Arg146 are Cytoplasmic-facing. The helical transmembrane segment at Phe147–Gly171 threads the bilayer. At Gly172–Gly185 the chain is on the periplasmic side. The helical transmembrane segment at Gly186–Ala201 threads the bilayer. At Tyr202–Pro221 the chain is on the cytoplasmic side. The helical transmembrane segment at Met222–Ser241 threads the bilayer. Ser241 is a binding site for NH4(+). The Periplasmic portion of the chain corresponds to Ala242–Ile248. A helical transmembrane segment spans residues Ala249–Ala273. The Cytoplasmic segment spans residues Leu274–Ser279. The helical transmembrane segment at Leu280–Tyr300 threads the bilayer. Over Ile301–Gly302 the chain is Periplasmic. Residues Val303–Val321 form a helical membrane-spanning segment. The Cytoplasmic portion of the chain corresponds to Thr322–Pro333. Residues Cys334 to Ala355 form a helical membrane-spanning segment. Topologically, residues Ala356–Met370 are periplasmic. Residues Gly371 to Ala399 form a helical membrane-spanning segment. Over Asp400–Ala428 the chain is Cytoplasmic.

It belongs to the ammonia transporter channel (TC 1.A.11.2) family. In terms of assembly, homotrimer. In response to elevation of the extracellular ammonium concentration, interacts and forms a complex with GlnK.

Its subcellular location is the cell inner membrane. With respect to regulation, in the presence of high extracellular ammonium concentrations, transport activity is inhibited by interaction with the regulatory protein GlnK. Formation of the GlnK-AmtB complex is influenced by intracellular pools of the effector molecules ATP, ADP, Mg(2+) and 2-oxoglutarate. The GlnK-AmtB interaction is also controlled by the level of intracellular glutamine and the uridylylation status of GlnK. Involved in the uptake of ammonium/ammonia (NH(4)(+)/NH(3)). Transport is electrogenic. Following sequestration of NH(4)(+) at the periplasmic face, NH(4)(+) is deprotonated and neutral NH(3) is transported into the cytoplasm. Neutral NH(3) and charged H(+) are carried separately across the membrane on a unique two-lane pathway, before recombining to NH(4)(+) inside the cell. The sequence is that of Ammonium transporter AmtB (amtB) from Escherichia coli O157:H7.